Here is a 134-residue protein sequence, read N- to C-terminus: Arsenate reductase (134 aa).

Active-site nucleophile residues include C11, C83, and C90. Intrachain disulfides connect C11–C83 and C83–C90.

The protein belongs to the low molecular weight phosphotyrosine protein phosphatase family. Thioredoxin-coupled ArsC subfamily.

The protein resides in the cytoplasm. It carries out the reaction arsenate + [thioredoxin]-dithiol + H(+) = arsenite + [thioredoxin]-disulfide + H2O. Its function is as follows. Catalyzes the reduction of arsenate [As(V)] to arsenite [As(III)]. The chain is Arsenate reductase from Bacillus cereus (strain 03BB102).